Consider the following 537-residue polypeptide: 2-succinyl-5-enolpyruvyl-6-hydroxy-3-cyclohexene-1-carboxylate synthase (537 aa).

This sequence belongs to the TPP enzyme family. MenD subfamily. Homodimer. It depends on Mg(2+) as a cofactor. Mn(2+) serves as cofactor. The cofactor is thiamine diphosphate.

The catalysed reaction is isochorismate + 2-oxoglutarate + H(+) = 5-enolpyruvoyl-6-hydroxy-2-succinyl-cyclohex-3-ene-1-carboxylate + CO2. Its pathway is quinol/quinone metabolism; 1,4-dihydroxy-2-naphthoate biosynthesis; 1,4-dihydroxy-2-naphthoate from chorismate: step 2/7. It functions in the pathway quinol/quinone metabolism; menaquinone biosynthesis. Its function is as follows. Catalyzes the thiamine diphosphate-dependent decarboxylation of 2-oxoglutarate and the subsequent addition of the resulting succinic semialdehyde-thiamine pyrophosphate anion to isochorismate to yield 2-succinyl-5-enolpyruvyl-6-hydroxy-3-cyclohexene-1-carboxylate (SEPHCHC). This chain is 2-succinyl-5-enolpyruvyl-6-hydroxy-3-cyclohexene-1-carboxylate synthase, found in Desulfotalea psychrophila (strain LSv54 / DSM 12343).